A 434-amino-acid chain; its full sequence is Prenyltransferase penG (434 aa).

Composition is skewed to polar residues over residues 1 to 14 and 21 to 35; these read MTQDVVTVSSQTAG and THSNPDNKTTSPSTW. Residues 1-35 are disordered; that stretch reads MTQDVVTVSSQTAGTIKESGTHSNPDNKTTSPSTW. Residues 104-105 and Glu108 each bind L-tryptophan; that span reads EI. Residues Arg122, Lys208, Arg275, Lys277, Tyr279, and Tyr348 each coordinate substrate.

The protein belongs to the tryptophan dimethylallyltransferase family.

It carries out the reaction yaequinolone E + dimethylallyl diphosphate + H2O = [(1'E)-3'-hydroxy-3',7'-dimethylocta-1',6'-dien-1'-yl]-quinolinone B + diphosphate. It participates in secondary metabolite biosynthesis. Its pathway is alkaloid biosynthesis. It functions in the pathway mycotoxin biosynthesis. Prenyltransferase; part of the gene cluster that mediates the biosynthesis of penigequinolones, potent insecticidal alkaloids that contain a highly modified 10-carbon prenyl group. The first stage is catalyzed by the nonribosomal peptide synthetase penN that condenses anthranilic acid and O-methyl-L-tyrosine to produce 4'-methoxycyclopeptin. 4'-methoxycyclopeptin is then converted to 4'-methoxydehydrocyclopeptin by the ketoglutarate-dependent dioxygenase penM through dehydrogenation to form a double bond between C-alpha and C-beta of the O-methyltyrosine side chain. PenM also converts its first product methoxydehydrocyclopeptin to 4'-methoxycyclopenin. The following conversion of 4'methoxycyclopenin into 4'-methoxyviridicatin is catalyzed by the cyclopenase penL. 4'-methoxyviridicatin is the precursor of quinolone natural products, and is further converted to quinolinone B. The prenyltransferase penI then catalyzes the canonical Friedel-Crafts alkylation of quinolinone B with dimethylallyl cation to yield dimethylallyl quinolone, which is subjected to FAD-dependent dehydrogenation by the FAD-linked oxidoreductase penH to yield conjugated aryl diene. The delta(3') double bond then serves as the site of the second alkylation with DMAPP catalyzed by the prenyltransferase penG to yield a carbenium ion intermediate, which can be attacked by H(2)O to yield a styrenyl quinolone containing a C3'-hydroxyprenyl chain, or undergo cyclization to yield yaequinolones J1 and J2. The conversion of the styrenyl quinolone into the tetrahydrofuran-containing yaequinolone C is performed by the FAD-dependent monooxygenase penE and involves epoxidation of the terminal C7'-C8' olefin, followed by epoxide ring opening initiated by the C3' hydroxyl group. The predicted cysteine hydrolase penJ acts as an epoxide hydrolase that enhances the rate of the 5-exo-tet cyclization step, increasing the yield of yaequinolone C. PenF catalyzes the cationic rearrangement of the epoxide formed by penE (before ring opening to produce yaequinolone C) into yaequinolone D. Finally, the short-chain dehydrogenase/reductase (SDR)-like reductase penD, catalyzes both the dehydration of yaequinolone D and the reduction of the resulting oxonium to yield penigequinolone. The sequence is that of Prenyltransferase penG from Penicillium thymicola.